A 704-amino-acid polypeptide reads, in one-letter code: Mannan-binding lectin serine protease 1 (704 aa).

Residues 1 to 24 (MRFLSFRRLLLYHVLCLTLTEVSA) form the signal peptide. The region spanning 25 to 143 (HTVELNEMFG…TGFDAHYMAV (119 aa)) is the CUB 1 domain. The segment at 25–189 (HTVELNEMFG…HTDNRTCRVE (165 aa)) is homodimerization. Positions 25 to 189 (HTVELNEMFG…HTDNRTCRVE (165 aa)) are interaction with MBL2. Residues 25–283 (HTVELNEMFG…STQSHSIQIL (259 aa)) are interaction with FCN2. An interaction with MBL1 region spans residues 25–305 (HTVELNEMFG…RLSYRAAGNE (281 aa)). An N-linked (GlcNAc...) asparagine glycan is attached at N54. 7 residues coordinate Ca(2+): E73, D81, D126, S128, D144, V145, and E147. C78 and C96 are disulfide-bonded. Residues 144–187 (DVDECKEREDEELSCDHYCHNYIGGYYCSCRFGYILHTDNRTCR) enclose the EGF-like; calcium-binding domain. 4 disulfide bridges follow: C148/C162, C158/C171, C173/C186, and C190/C217. Residues N164, Y165, and G168 each contribute to the Ca(2+) site. Residue N164 is modified to (3R)-3-hydroxyasparagine. Residue N183 is glycosylated (N-linked (GlcNAc...) asparagine). One can recognise a CUB 2 domain in the interval 190–302 (CSGNLFTQRT…RGWRLSYRAA (113 aa)). 4 residues coordinate Ca(2+): E240, D250, D287, and S289. C247 and C265 form a disulfide bridge. Sushi domains lie at 304–369 (NECP…TCKI) and 370–439 (VDCG…TCLP). 6 cysteine pairs are disulfide-bonded: C306-C354, C334-C367, C372-C419, C402-C437, C441-C577, and C480-C496. 2 N-linked (GlcNAc...) asparagine glycosylation sites follow: N390 and N412. The Peptidase S1 domain maps to 454–701 (IFNGRPAQKG…NKDWIQRVTG (248 aa)). H495 acts as the Charge relay system in catalysis. An N-linked (GlcNAc...) asparagine glycan is attached at L538. D557 serves as the catalytic Charge relay system. The N-linked (GlcNAc...) asparagine glycan is linked to E604. 2 disulfides stabilise this stretch: C619–C636 and C647–C677. S651 (charge relay system) is an active-site residue.

It belongs to the peptidase S1 family. As to quaternary structure, homodimer. Interacts with the oligomeric lectins MBL2, FCN2 and FCN3; triggers the lectin pathway of complement through activation of C3. Interacts with SERPING1. Interacts with COLEC11; probably triggers the lectin pathway of complement. The iron and 2-oxoglutarate dependent 3-hydroxylation of aspartate and asparagine is (R) stereospecific within EGF domains. In terms of processing, N-glycosylated. Some N-linked glycan are of the complex-type. Post-translationally, autoproteolytic processing of the proenzyme produces the active enzyme composed on the heavy and the light chain held together by a disulfide bond. Isoform 1 but not isoform 2 is activated through autoproteolytic processing. Protein of the plasma which is primarily expressed by liver.

It localises to the secreted. Its activity is regulated as follows. Inhibited by SERPING1 and A2M. In terms of biological role, functions in the lectin pathway of complement, which performs a key role in innate immunity by recognizing pathogens through patterns of sugar moieties and neutralizing them. The lectin pathway is triggered upon binding of mannan-binding lectin (MBL) and ficolins to sugar moieties which leads to activation of the associated proteases MASP1 and MASP2. Functions as an endopeptidase and may activate MASP2 or C2 or directly activate C3 the key component of complement reaction. Isoform 2 may have an inhibitory effect on the activation of the lectin pathway of complement or may cleave IGFBP5. Also plays a role in development. The chain is Mannan-binding lectin serine protease 1 (Masp1) from Rattus norvegicus (Rat).